Consider the following 288-residue polypeptide: UPF0494 membrane protein C212.04c (288 aa).

Transmembrane regions (helical) follow at residues 107–127 (WVLL…KFKI), 144–164 (IWGP…AFNY), 174–194 (PLIS…SVII), and 198–218 (IAGV…GVIA).

It belongs to the UPF0494 family.

The protein localises to the cytoplasm. Its subcellular location is the endoplasmic reticulum. It is found in the membrane. This chain is UPF0494 membrane protein C212.04c, found in Schizosaccharomyces pombe (strain 972 / ATCC 24843) (Fission yeast).